The chain runs to 126 residues: Histone H2B 1.2 (126 aa).

A compositionally biased stretch (low complexity) spans 1–12; sequence MPEPAKSAPAPK. Positions 1 to 35 are disordered; that stretch reads MPEPAKSAPAPKKGSKKAVTKTPKKDGKKRRKSRK. N6-acetyllysine is present on residues lysine 6 and lysine 13. Serine 15 carries the phosphoserine modification. Residues lysine 16 and lysine 21 each carry the N6-acetyllysine modification. Serine 113 is a glycosylation site (O-linked (GlcNAc) serine). A Glycyl lysine isopeptide (Lys-Gly) (interchain with G-Cter in ubiquitin) cross-link involves residue lysine 121.

The protein belongs to the histone H2B family. As to quaternary structure, the nucleosome is a histone octamer containing two molecules each of H2A, H2B, H3 and H4 assembled in one H3-H4 heterotetramer and two H2A-H2B heterodimers. The octamer wraps approximately 147 bp of DNA. Monoubiquitination of Lys-121 by BRE1 gives a specific tag for epigenetic transcriptional activation and is also prerequisite for histone H3 'Lys-4' and 'Lys-79' methylation. Post-translationally, phosphorylated on Ser-15 during developmentally programmed apoptosis; which may facilitate apoptotic chromatin condensation. In terms of processing, glcNAcylation at Ser-113 promotes monoubiquitination of Lys-121. It fluctuates in response to extracellular glucose, and associates with transcribed genes.

It is found in the nucleus. The protein localises to the chromosome. Core component of nucleosome. Nucleosomes wrap and compact DNA into chromatin, limiting DNA accessibility to the cellular machineries which require DNA as a template. Histones thereby play a central role in transcription regulation, DNA repair, DNA replication and chromosomal stability. DNA accessibility is regulated via a complex set of post-translational modifications of histones, also called histone code, and nucleosome remodeling. The protein is Histone H2B 1.2 of Xenopus laevis (African clawed frog).